We begin with the raw amino-acid sequence, 173 residues long: Zinc finger matrin-type protein 5 (173 aa).

Residues 51–79 (ERSKEVCRKFVQTGQCVFGTSCRFSHMSE) form a C3H1-type zinc finger. The interval 83–111 (KMLEQKIDDEKRQKEDPDQDGSSERSVDE) is disordered.

In terms of assembly, component of the U11/U12 snRNPs that are part of the U12-type spliceosome.

Its subcellular location is the nucleus. The polypeptide is Zinc finger matrin-type protein 5 (zmat5) (Danio rerio (Zebrafish)).